Consider the following 282-residue polypeptide: Undecaprenyl-diphosphatase (282 aa).

Helical transmembrane passes span 40–60 (GAAF…IYFM), 89–109 (WMIA…KDDI), 113–133 (LRSL…LSIA), 150–170 (ISEI…MALI), 196–216 (FSFL…LYKT), 230–250 (IAVA…FLLT), and 258–278 (GIFI…IGTG).

Belongs to the UppP family.

It localises to the cell inner membrane. It carries out the reaction di-trans,octa-cis-undecaprenyl diphosphate + H2O = di-trans,octa-cis-undecaprenyl phosphate + phosphate + H(+). Its function is as follows. Catalyzes the dephosphorylation of undecaprenyl diphosphate (UPP). Confers resistance to bacitracin. This Chlorobaculum parvum (strain DSM 263 / NCIMB 8327) (Chlorobium vibrioforme subsp. thiosulfatophilum) protein is Undecaprenyl-diphosphatase.